A 153-amino-acid polypeptide reads, in one-letter code: Cytochrome c-554 (153 aa).

Positions 1 to 20 (MRPIPALALTFSLVAMPALA) are cleaved as a signal peptide. Position 21 is a pyrrolidone carboxylic acid (Gln-21). Positions 37, 142, 145, and 146 each coordinate heme c.

In terms of processing, binds 1 heme c group covalently per subunit.

It is found in the periplasm. Functionally, monoheme c-type cytochrome, that is particularly expressed when cells generate energy via aerobic respiration. The sequence is that of Cytochrome c-554 (cycF) from Cereibacter sphaeroides (strain ATCC 17023 / DSM 158 / JCM 6121 / CCUG 31486 / LMG 2827 / NBRC 12203 / NCIMB 8253 / ATH 2.4.1.) (Rhodobacter sphaeroides).